The following is a 173-amino-acid chain: Mediator of RNA polymerase II transcription subunit 10 (173 aa).

Residues 1–20 (MDPNSPMFQNTPQQPMSLQR) show a composition bias toward polar residues. Residues 1-45 (MDPNSPMFQNTPQQPMSLQRSVDDRIDRERTAKKEKDDEKKKQED) are disordered. Residues 21-45 (SVDDRIDRERTAKKEKDDEKKKQED) are compositionally biased toward basic and acidic residues.

This sequence belongs to the Mediator complex subunit 10 family. As to quaternary structure, component of the Mediator complex.

It localises to the nucleus. Component of the Mediator complex, a coactivator involved in the regulated transcription of nearly all RNA polymerase II-dependent genes. Mediator functions as a bridge to convey information from gene-specific regulatory proteins to the basal RNA polymerase II transcription machinery. Mediator is recruited to promoters by direct interactions with regulatory proteins and serves as a scaffold for the assembly of a functional preinitiation complex with RNA polymerase II and the general transcription factors. The sequence is that of Mediator of RNA polymerase II transcription subunit 10 (mdt-10) from Caenorhabditis briggsae.